A 164-amino-acid chain; its full sequence is Class I hydrophobin rodA (164 aa).

The signal sequence occupies residues 1-18; the sequence is MRFSISALVLGLAATVYA. The N-linked (GlcNAc...) asparagine glycan is linked to asparagine 50. 4 disulfide bridges follow: cysteine 60/cysteine 138, cysteine 68/cysteine 132, cysteine 69/cysteine 109, and cysteine 139/cysteine 157.

This sequence belongs to the fungal hydrophobin family. As to quaternary structure, self-assembles to form functional amyloid fibrils called rodlets. Self-assembly into fibrillar rodlets occurs spontaneously at hydrophobic:hydrophilic interfaces and the rodlets further associate laterally to form amphipathic monolayers.

Its subcellular location is the secreted. It localises to the cell wall. In terms of biological role, aerial growth, conidiation, and dispersal of filamentous fungi in the environment rely upon a capability of their secreting small amphipathic proteins called hydrophobins (HPBs) with low sequence identity. Class I can self-assemble into an outermost layer of rodlet bundles on aerial cell surfaces, conferring cellular hydrophobicity that supports fungal growth, development and dispersal; whereas Class II form highly ordered films at water-air interfaces through intermolecular interactions but contribute nothing to the rodlet structure. RodA is a class I hydrophobin involved in the cell surface hydrophobicity and conidiation under aerial conditions. The surface rodlet layer of the conidial cell wall makes airborne conidia of filamentous fungi inert to both innate and adaptive immunity. The chain is Class I hydrophobin rodA from Penicillium camembertii.